Reading from the N-terminus, the 175-residue chain is Adenine phosphoribosyltransferase (175 aa).

The protein belongs to the purine/pyrimidine phosphoribosyltransferase family. Homodimer.

Its subcellular location is the cytoplasm. The catalysed reaction is AMP + diphosphate = 5-phospho-alpha-D-ribose 1-diphosphate + adenine. It participates in purine metabolism; AMP biosynthesis via salvage pathway; AMP from adenine: step 1/1. In terms of biological role, catalyzes a salvage reaction resulting in the formation of AMP, that is energically less costly than de novo synthesis. The polypeptide is Adenine phosphoribosyltransferase (Nitrosospira multiformis (strain ATCC 25196 / NCIMB 11849 / C 71)).